Consider the following 103-residue polypeptide: Small ribosomal subunit protein uS14c (103 aa).

The segment at 26 to 56 is disordered; sequence SSKKKIRSKVSPLSLSEKTKMQEKLQSLPRN.

This sequence belongs to the universal ribosomal protein uS14 family. In terms of assembly, part of the 30S ribosomal subunit.

It localises to the plastid. Its subcellular location is the chloroplast. Functionally, binds 16S rRNA, required for the assembly of 30S particles. The sequence is that of Small ribosomal subunit protein uS14c from Saccharum officinarum (Sugarcane).